The primary structure comprises 189 residues: Elongation factor P (189 aa).

An N6-(3,6-diaminohexanoyl)-5-hydroxylysine modification is found at lysine 34.

Belongs to the elongation factor P family. In terms of processing, may be beta-lysylated on the epsilon-amino group of Lys-34 by the combined action of EpmA and EpmB, and then hydroxylated on the C5 position of the same residue by EpmC (if this protein is present). Lysylation is critical for the stimulatory effect of EF-P on peptide-bond formation. The lysylation moiety may extend toward the peptidyltransferase center and stabilize the terminal 3-CCA end of the tRNA. Hydroxylation of the C5 position on Lys-34 may allow additional potential stabilizing hydrogen-bond interactions with the P-tRNA.

The protein resides in the cytoplasm. Its pathway is protein biosynthesis; polypeptide chain elongation. Functionally, involved in peptide bond synthesis. Alleviates ribosome stalling that occurs when 3 or more consecutive Pro residues or the sequence PPG is present in a protein, possibly by augmenting the peptidyl transferase activity of the ribosome. Modification of Lys-34 is required for alleviation. The sequence is that of Elongation factor P from Nitrosococcus oceani (strain ATCC 19707 / BCRC 17464 / JCM 30415 / NCIMB 11848 / C-107).